The chain runs to 197 residues: Guanylate kinase (197 aa).

In terms of domain architecture, Guanylate kinase-like spans 7–185; the sequence is GLIIILSSPS…TLKKIHEIIV (179 aa). 14 to 21 provides a ligand contact to ATP; it reads SPSGTGKS.

This sequence belongs to the guanylate kinase family.

It localises to the cytoplasm. It catalyses the reaction GMP + ATP = GDP + ADP. Its function is as follows. Essential for recycling GMP and indirectly, cGMP. In Rickettsia prowazekii (strain Madrid E), this protein is Guanylate kinase (gmk).